The following is a 113-amino-acid chain: U10-theraphotoxin-Hs2a (113 aa).

Residues 1 to 21 form the signal peptide; that stretch reads MNTVRVTFLLVFVLAVSLGQA. The propeptide occupies 22 to 67; the sequence is DEDGNRMEKRQKKTEAENLLLPKLEELDAKLWEEDSVESRNSRQKR. 3 disulfides stabilise this stretch: Cys68/Cys86, Cys75/Cys91, and Cys85/Cys106.

Belongs to the neurotoxin 14 (magi-1) family. 02 (HWTX-XVIc) subfamily. As to expression, expressed by the venom gland.

The protein resides in the secreted. Probable ion channel inhibitor. This chain is U10-theraphotoxin-Hs2a, found in Cyriopagopus schmidti (Chinese bird spider).